The following is a 255-amino-acid chain: Cysteine protease avirulence protein AvrRpt2 (255 aa).

The interval 1–50 is disordered; it reads MKIAPVAINHSPLSREVPSHAAPTQAKQTNLQSEAGDLDARKSSASSPET. Residues 1–71 constitute a propeptide, removed in mature form; the sequence is MKIAPVAINH…RHKIEVPAFG (71 aa). Residues 70–71 form a determinants of cleavage specificity region; it reads FG. A disordered region spans residues 76 to 100; the sequence is KKSSKHETGGSSANADSSSVASDST. A compositionally biased stretch (low complexity) spans 86-98; sequence SSANADSSSVASD. The active-site Nucleophile is cysteine 122. Active-site residues include histidine 208 and aspartate 226.

This sequence belongs to the peptidase C70 family. Interacts physically with plant cell ROC1 (Arabidopsis single-domain cyclophilin) and RIN4. In terms of processing, autocleaved inside plant cells upon activation by cyclophilin. Cleavage is crucial in subcellular location and in eliciting HR. Inhibited by cyclosporin A (cyclophilin inhibitor).

The protein localises to the secreted. Its subcellular location is the host cell membrane. Functionally, effector protein involved in gene-for-gene resistance in plants expressing RPS2. Its thiol protease activity is required for the degradation of plant cell RIN4 and consequent activation of RPS2 during bacterial infection. The activation of RPS2 is sufficient for the induction of hypersensitive response (HR) and plant resistance. Cleavage of RIN4 by AvrRpt2 also interferes with RPM1-mediated resistance activated by either AvrRpm1 or AvrB. Contributes to virulence in plants lacking the resistance protein RPS2 promoting pathogen growth and disease symptoms. Inhibits PAMP (pathogen-associated molecular patterns)-induced signaling compromising the host's basal defense system. Blocks plant callose deposition, flg22 (a peptide corresponding to the most conserved domain of flagellin) induced accumulation of PR-1, PR-2 and PR-5 and activation of GST6 transcription. The mechanism of virulence is unknown, but this activity is independent of ethylene and salicylic acid response pathways and independent of RIN4 disappearance. This Pseudomonas syringae pv. tomato protein is Cysteine protease avirulence protein AvrRpt2 (avrRpt2).